We begin with the raw amino-acid sequence, 187 residues long: UPF0301 protein plu1183 (187 aa).

This sequence belongs to the UPF0301 (AlgH) family.

This chain is UPF0301 protein plu1183, found in Photorhabdus laumondii subsp. laumondii (strain DSM 15139 / CIP 105565 / TT01) (Photorhabdus luminescens subsp. laumondii).